We begin with the raw amino-acid sequence, 313 residues long: Fe-S cluster assembly protein dre2 (313 aa).

2 disordered regions span residues 1 to 25 and 151 to 187; these read MSIT…SQKR and GRKK…AQNN. The interval 20-145 is N-terminal SAM-like domain; it reads NGSQKRNLLL…FEKPVQEAAV (126 aa). A linker region spans residues 146-203; it reads PLKLGGRKKKDKTNGVNGVQNGVATNGASTNGVGMFDPAQNNDDELIDEDALLSDDDL. The segment covering 159-177 has biased composition (polar residues); that stretch reads NGVNGVQNGVATNGASTNG. [2Fe-2S] cluster is bound by residues Cys213, Cys225, Cys228, and Cys230. Residues 213–230 are fe-S binding site A; it reads CVPETAKKRRRPCKDCTC. 4 residues coordinate [4Fe-4S] cluster: Cys276, Cys279, Cys287, and Cys290. Short sequence motifs (cx2C motif) lie at residues 276-279 and 287-290; these read CNSC and CSSC. The fe-S binding site B stretch occupies residues 276–290; that stretch reads CNSCSLGDAFRCSSC.

This sequence belongs to the anamorsin family. As to quaternary structure, monomer. Interacts with tah18. Interacts with mia40. It depends on [2Fe-2S] cluster as a cofactor. [4Fe-4S] cluster serves as cofactor.

Its subcellular location is the cytoplasm. It is found in the mitochondrion intermembrane space. Its function is as follows. Component of the cytosolic iron-sulfur (Fe-S) protein assembly (CIA) machinery required for the maturation of extramitochondrial Fe-S proteins. Part of an electron transfer chain functioning in an early step of cytosolic Fe-S biogenesis, facilitating the de novo assembly of a [4Fe-4S] cluster on the scaffold complex cfd1-nbp35. Electrons are transferred to dre2 from NADPH via the FAD- and FMN-containing protein tah18. Tah18-dre2 are also required for the assembly of the diferric tyrosyl radical cofactor of ribonucleotide reductase (RNR), probably by providing electrons for reduction during radical cofactor maturation in the catalytic small subunit rnr2. This is Fe-S cluster assembly protein dre2 from Aspergillus oryzae (strain ATCC 42149 / RIB 40) (Yellow koji mold).